Consider the following 435-residue polypeptide: T-cell defective protein 2 (435 aa).

Residues 65-146 (NASTSFQSQP…KTPDSLRKSI (82 aa)) are disordered. Residues 322 to 352 (TKISAKKEKEQKKSAAKEAALKEAKEKEMRI) adopt a coiled-coil conformation. The tract at residues 393 to 419 (FFKANPPPAPRAPQAPELASGPRRIPT) is disordered.

Strongly expressed in the cytoplasm of the pharynx muscle cells and several head neurons, probably the IL1s or IL2s, throughout development. Also expressed in some other unidentified neurons in the tail region. Weakly expressed in the nuclei of the T-cells and the T-cell daughters. Not expressed in gonads and in P12 cell.

Its subcellular location is the nucleus. It is found in the cytoplasm. May act synergistically with the Wnt pathways to control T-cell fate specification, gonad development, and P12 cell fate specification. Required for the distribution of pop-1 and tlp-1 proteins. The chain is T-cell defective protein 2 (tcl-2) from Caenorhabditis elegans.